The sequence spans 97 residues: DNA-directed RNA polymerase subunit omega (97 aa).

Positions Met1–Leu16 are enriched in polar residues. A disordered region spans residues Met1 to Gly21.

Belongs to the RNA polymerase subunit omega family. As to quaternary structure, the RNAP catalytic core consists of 2 alpha, 1 beta, 1 beta' and 1 omega subunit. When a sigma factor is associated with the core the holoenzyme is formed, which can initiate transcription.

It carries out the reaction RNA(n) + a ribonucleoside 5'-triphosphate = RNA(n+1) + diphosphate. In terms of biological role, promotes RNA polymerase assembly. Latches the N- and C-terminal regions of the beta' subunit thereby facilitating its interaction with the beta and alpha subunits. The polypeptide is DNA-directed RNA polymerase subunit omega (Saccharopolyspora erythraea (strain ATCC 11635 / DSM 40517 / JCM 4748 / NBRC 13426 / NCIMB 8594 / NRRL 2338)).